We begin with the raw amino-acid sequence, 194 residues long: CASP-like protein 1D1 (194 aa).

Basic and acidic residues predominate over residues 1–16 (MGSDETKSTLDTERST). Positions 1–23 (MGSDETKSTLDTERSTVPRTGTT) are disordered. The Cytoplasmic segment spans residues 1–31 (MGSDETKSTLDTERSTVPRTGTTTKSCSITQ). Residues 32 to 52 (VVLRFVLFAATLTSIVVMVTS) form a helical membrane-spanning segment. The Extracellular portion of the chain corresponds to 53–77 (KQTKNIFIPGTPIRIPAAKFTNSPA). Residues 78-98 (LIYFVVALSVACFYSIVSTFV) form a helical membrane-spanning segment. The Cytoplasmic segment spans residues 99-109 (TVSAFKKHSCS). The chain crosses the membrane as a helical span at residues 110-130 (AILLLNLAIMDAVMVGIVASA). The Extracellular portion of the chain corresponds to 131–163 (TGAGGGVAYLGLKGNKEVRWGKICNIYDKFCRH). Residues 164–184 (VGGAIAVSLFASVILLLLSII) traverse the membrane as a helical segment. Residues 185–194 (SVLSLYKKIR) lie on the Cytoplasmic side of the membrane.

It belongs to the Casparian strip membrane proteins (CASP) family. In terms of assembly, homodimer and heterodimers.

Its subcellular location is the cell membrane. The chain is CASP-like protein 1D1 from Arabidopsis lyrata subsp. lyrata (Lyre-leaved rock-cress).